Here is a 313-residue protein sequence, read N- to C-terminus: Protoheme IX farnesyltransferase (313 aa).

Transmembrane regions (helical) follow at residues 32–52, 53–73, 120–140, 153–173, 180–200, 226–246, 248–268, and 284–304; these read VMSLVVFTALVGMLLAPGDFH, PVLAITAMLCIAVGGGAAGAL, ILVNWVAGALLAFTIFFYVVI, IVIGGAAGALPPVVAWAAVTG, LLLFAIIFFWTPPHFWALALF, ILLYTIVLVAVAAAPWPLGYF, AIYGVASLALGGWMLVLALRV, and LFKFSILYLFALFSILLLEVV.

Belongs to the UbiA prenyltransferase family. Protoheme IX farnesyltransferase subfamily.

The protein localises to the cell inner membrane. It carries out the reaction heme b + (2E,6E)-farnesyl diphosphate + H2O = Fe(II)-heme o + diphosphate. It participates in porphyrin-containing compound metabolism; heme O biosynthesis; heme O from protoheme: step 1/1. Its function is as follows. Converts heme B (protoheme IX) to heme O by substitution of the vinyl group on carbon 2 of heme B porphyrin ring with a hydroxyethyl farnesyl side group. The protein is Protoheme IX farnesyltransferase of Rhodopseudomonas palustris (strain HaA2).